Here is a 385-residue protein sequence, read N- to C-terminus: Sesquiterpene alcohol synthase (385 aa).

Positions 123 and 127 each coordinate Mg(2+). The DDXXD motif motif lies at 123-127 (DDISD).

The protein belongs to the terpene synthase family. Requires Mg(2+) as cofactor. As to expression, specifically expressed in tissues lining the cuticle of the abdominal sternites of mature males.

The enzyme catalyses (2E,6E)-farnesyl diphosphate + H2O = (1S,6S,7R)-sesquipiperitol + diphosphate. It participates in pheromone biosynthesis. Sesquiterpene alcohol synthase that catalyzes the formation of (1S,6S,7R)-sesquipiperitol, a terpene intermediate in murgantiol biosynthesis, a male-released aggregation pheromone. The protein is Sesquiterpene alcohol synthase of Murgantia histrionica (Harlequin bug).